The chain runs to 525 residues: MKHLEQRIHALLNADAAATLAGIRRGIEKESLRITTDGTLAQTPHPRALGSALTHPYITTDYSEALLEFITPPSTELHKPIEFLEQLHRYVYSHIGDEVLWVNSMPCMIGKDSDVPVAQYGSSNVGRMKTVYREGLGHRYGRKMQTIAGIHYNFSYPDAFWKLNQQLEGDNAPLQDYISRRYFDLTRNFQRYSWLLVYLFGASPALCASFLAGREHDLLERFDHSLYRPQATSLRMSDLGYQNNAQSSLAISYNNLDEYVSTLTHAINTPEPAYEKMGVKVTDADGNVKYQQLNANILQIENEYYSSIRPKRTIKPGERPTTALQERGVEYIEIRALDLNPFEPVGINQQEIRFLDLFATYCLLRESPQLEKCDLHASKENLRKVVYDGRNTDIQLYNWGKSVSLKNWASEKLTQMQPIAELFDRAHGGNNYAEALAHQQEKVDNPSATPSAQILEQLESRNQGFFQFAMEQALAHRDHFLSGQRCDATNQQLEALAADSLAEQAAGEAADQQSFEEYLADYFHD.

It belongs to the glutamate--cysteine ligase type 1 family. Type 1 subfamily.

The enzyme catalyses L-cysteine + L-glutamate + ATP = gamma-L-glutamyl-L-cysteine + ADP + phosphate + H(+). The protein operates within sulfur metabolism; glutathione biosynthesis; glutathione from L-cysteine and L-glutamate: step 1/2. In Alcanivorax borkumensis (strain ATCC 700651 / DSM 11573 / NCIMB 13689 / SK2), this protein is Glutamate--cysteine ligase.